The sequence spans 316 residues: Aprataxin (316 aa).

An FHA-like domain is found at 1-38; it reads HASARGEGFLLLKADCNKGYVTVKQIGVNPTSVDLVDV. Residues 104–142 form a disordered region; it reads KKMEVVDTQSSSADLRPSKSSVSPHEGTTSRKEHLGHWS. The segment covering 110–130 has biased composition (polar residues); sequence DTQSSSADLRPSKSSVSPHEG. The HIT domain occupies 142–247; that stretch reads SQGLKSSMQD…ISQDFDSPAL (106 aa). Interaction with DNA substrate regions lie at residues 167 to 171 and 229 to 230; these read DKYPK and SM. The short motif at 232-236 is the Histidine triad motif element; sequence QLHLH. H234 acts as the Tele-AMP-histidine intermediate in catalysis. The C2H2-type zinc-finger motif lies at 291-313; that stretch reads LRCHLCKQQLSTIPQLKEHLKKH.

It localises to the nucleus. The protein resides in the nucleoplasm. Its subcellular location is the nucleolus. It carries out the reaction a 5'-end adenosine-5'-diphospho-5'-2'-deoxyribonucleoside-DNA + H2O = a 5'-end 5'-phospho-2'-deoxyribonucleoside-DNA + AMP + 2 H(+). The catalysed reaction is a 5'-end adenosine-5'-diphospho-5'-ribonucleoside-2'-deoxyribonucleotide-DNA + H2O = a 5'-end 5'-phospho-ribonucleoside-2'-deoxyribonucleotide-DNA + AMP + 2 H(+). The enzyme catalyses a 3'-end 2'-deoxyribonucleotide-3'-diphospho-5'-guanosine-DNA + H2O = a 3'-end 2'-deoxyribonucleotide 3'-phosphate-DNA + GMP + 2 H(+). In terms of biological role, DNA-binding protein involved in single-strand DNA break repair, double-strand DNA break repair and base excision repair. Resolves abortive DNA ligation intermediates formed either at base excision sites, or when DNA ligases attempt to repair non-ligatable breaks induced by reactive oxygen species. Catalyzes the release of adenylate groups covalently linked to 5'-phosphate termini, resulting in the production of 5'-phosphate termini that can be efficiently rejoined. Also able to hydrolyze adenosine 5'-monophosphoramidate (AMP-NH(2)) and diadenosine tetraphosphate (AppppA), but with lower catalytic activity. Likewise, catalyzes the release of 3'-linked guanosine (DNAppG) and inosine (DNAppI) from DNA, but has higher specific activity with 5'-linked adenosine (AppDNA). This is Aprataxin (APTX) from Gallus gallus (Chicken).